The sequence spans 317 residues: Putative 2-hydroxyacid dehydrogenase SAB2178 (317 aa).

NAD(+) is bound by residues 155–156 (EI), 234–236 (ASR), and aspartate 260. The active site involves arginine 236. Residue glutamate 265 is part of the active site. The active-site Proton donor is the histidine 283. An NAD(+)-binding site is contributed by 283 to 286 (HIGN).

Belongs to the D-isomer specific 2-hydroxyacid dehydrogenase family.

This Staphylococcus aureus (strain bovine RF122 / ET3-1) protein is Putative 2-hydroxyacid dehydrogenase SAB2178.